The chain runs to 554 residues: CTP synthase (554 aa).

Positions 1 to 265 (MTPLIFVTGG…DELVIVQFKL (265 aa)) are amidoligase domain. S13 provides a ligand contact to CTP. S13 contacts UTP. ATP contacts are provided by residues 14–19 (SLGKGI) and D71. Residues D71 and E139 each coordinate Mg(2+). CTP-binding positions include 146–148 (DIE), 186–191 (KTKPTQ), and K222. UTP is bound by residues 186–191 (KTKPTQ) and K222. A Glutamine amidotransferase type-1 domain is found at 292-545 (TIAVVGKYVD…VRAAREKKAG (254 aa)). G353 contacts L-glutamine. Residue C380 is the Nucleophile; for glutamine hydrolysis of the active site. Residues 381–384 (YGMQ), E404, and R471 contribute to the L-glutamine site. Residues H518 and E520 contribute to the active site.

This sequence belongs to the CTP synthase family. As to quaternary structure, homotetramer.

It carries out the reaction UTP + L-glutamine + ATP + H2O = CTP + L-glutamate + ADP + phosphate + 2 H(+). The catalysed reaction is L-glutamine + H2O = L-glutamate + NH4(+). The enzyme catalyses UTP + NH4(+) + ATP = CTP + ADP + phosphate + 2 H(+). It functions in the pathway pyrimidine metabolism; CTP biosynthesis via de novo pathway; CTP from UDP: step 2/2. Allosterically activated by GTP, when glutamine is the substrate; GTP has no effect on the reaction when ammonia is the substrate. The allosteric effector GTP functions by stabilizing the protein conformation that binds the tetrahedral intermediate(s) formed during glutamine hydrolysis. Inhibited by the product CTP, via allosteric rather than competitive inhibition. In terms of biological role, catalyzes the ATP-dependent amination of UTP to CTP with either L-glutamine or ammonia as the source of nitrogen. Regulates intracellular CTP levels through interactions with the four ribonucleotide triphosphates. The protein is CTP synthase of Xanthomonas oryzae pv. oryzae (strain MAFF 311018).